A 314-amino-acid chain; its full sequence is Deoxymugineic acid synthase 1-A (314 aa).

The segment at 1 to 21 is disordered; that stretch reads MGAGDKTAAGMPRIGMGTAVQ. NADP(+) is bound at residue Asp44. Tyr49 functions as the Proton donor in the catalytic mechanism. His112 contributes to the substrate binding site. Residues 158–159, Gln180, 258–266, and 273–281 each bind NADP(+); these read AN, FDEARMREN, and ELTEEEHRR.

The protein belongs to the aldo/keto reductase family. In terms of tissue distribution, mostly expressed in root tissues, observed in mesocotyl and embryonic roots, seedling roots, crown and seedling leafes, mature bracts, anthers, pistil, caryopsis and embryos.

It carries out the reaction 2'-deoxymugineate + NAD(+) = 3''-deamino-3''-oxonicotianamine + NADH + H(+). It catalyses the reaction 2'-deoxymugineate + NADP(+) = 3''-deamino-3''-oxonicotianamine + NADPH + H(+). Its pathway is siderophore biosynthesis. Catalyzes the reduction of a 3''-keto intermediate during the biosynthesis of 2'-deoxymugineic acid (DMA) from L-Met. Involved in the formation of phytosiderophores (MAs) belonging to the mugineic acid family and required to acquire iron. The chain is Deoxymugineic acid synthase 1-A from Triticum aestivum (Wheat).